The chain runs to 201 residues: NADH-quinone oxidoreductase subunit C (201 aa).

Belongs to the complex I 30 kDa subunit family. NDH-1 is composed of 14 different subunits. Subunits NuoB, C, D, E, F, and G constitute the peripheral sector of the complex.

Its subcellular location is the cell inner membrane. It catalyses the reaction a quinone + NADH + 5 H(+)(in) = a quinol + NAD(+) + 4 H(+)(out). Its function is as follows. NDH-1 shuttles electrons from NADH, via FMN and iron-sulfur (Fe-S) centers, to quinones in the respiratory chain. The immediate electron acceptor for the enzyme in this species is believed to be ubiquinone. Couples the redox reaction to proton translocation (for every two electrons transferred, four hydrogen ions are translocated across the cytoplasmic membrane), and thus conserves the redox energy in a proton gradient. This Azoarcus sp. (strain BH72) protein is NADH-quinone oxidoreductase subunit C.